We begin with the raw amino-acid sequence, 119 residues long: FAD-linked sulfhydryl oxidase (119 aa).

One can recognise an ERV/ALR sulfhydryl oxidase domain in the interval 1–97 (MLHWGPKYWR…ISWSEYKNIY (97 aa)). A disulfide bridge connects residues C44 and C47.

Belongs to the asfivirus B119L family. As to quaternary structure, interacts with A151R. FAD serves as cofactor.

It is found in the host cytoplasm. The protein resides in the virion. The enzyme catalyses 2 R'C(R)SH + O2 = R'C(R)S-S(R)CR' + H2O2. In terms of biological role, FAD-dependent sulfhydryl oxidase that catalyzes the formation of disulfide bonds in viral proteins produced in the cell cytoplasm. Involved in virion maturation. This is FAD-linked sulfhydryl oxidase from African swine fever virus (isolate Warthog/Namibia/Wart80/1980) (ASFV).